Consider the following 110-residue polypeptide: uncharacterized protein (110 aa).

2 helical membrane-spanning segments follow: residues Val-6–Val-26 and Thr-38–Pro-58.

It is found in the membrane. This is an uncharacterized protein from Saccharomyces cerevisiae (strain ATCC 204508 / S288c) (Baker's yeast).